Reading from the N-terminus, the 199-residue chain is Probable nicotinate-nucleotide adenylyltransferase (199 aa).

It belongs to the NadD family.

It catalyses the reaction nicotinate beta-D-ribonucleotide + ATP + H(+) = deamido-NAD(+) + diphosphate. It functions in the pathway cofactor biosynthesis; NAD(+) biosynthesis; deamido-NAD(+) from nicotinate D-ribonucleotide: step 1/1. Catalyzes the reversible adenylation of nicotinate mononucleotide (NaMN) to nicotinic acid adenine dinucleotide (NaAD). This chain is Probable nicotinate-nucleotide adenylyltransferase, found in Roseiflexus castenholzii (strain DSM 13941 / HLO8).